A 792-amino-acid polypeptide reads, in one-letter code: Ribonucleoside-diphosphate reductase large subunit (792 aa).

In terms of domain architecture, ATP-cone spans 1 to 92; it reads MHVIKRDGRQ…VSNLHKETKK (92 aa). Residues 5–6, 11–17, Thr53, and Asp57 contribute to the ATP site; these read KR and ERVMFDK. N6-acetyllysine is present on Lys17. Residues Ser202 and Ser217 each contribute to the GDP site. Cys218 and Cys444 are oxidised to a cystine. DTTP contacts are provided by residues 226–228, Lys243, Arg256, and 263–264; these read DSI and AG. Position 376 is an N6-acetyllysine (Lys376). Asn427 is a GDP binding site. Asn427 serves as the catalytic Proton acceptor. The active-site Cysteine radical intermediate is the Cys429. GDP is bound by residues Glu431 and 604-607; that span reads TAST. The Proton acceptor role is filled by Glu431. Position 751 is a phosphothreonine (Thr751).

Belongs to the ribonucleoside diphosphate reductase large chain family. In terms of assembly, heterodimer of a large and a small subunit. Interacts with RRM2B. Interacts with AHCYL1 which inhibits its activity.

The protein resides in the cytoplasm. It carries out the reaction a 2'-deoxyribonucleoside 5'-diphosphate + [thioredoxin]-disulfide + H2O = a ribonucleoside 5'-diphosphate + [thioredoxin]-dithiol. Its activity is regulated as follows. Under complex allosteric control mediated by deoxynucleoside triphosphates and ATP binding to separate specificity and activation sites on the M1 subunit. The type of nucleotide bound at the specificity site determines substrate preference. It seems probable that ATP makes the enzyme reduce CDP and UDP, dGTP favors ADP reduction and dTTP favors GDP reduction. Stimulated by ATP and inhibited by dATP binding to the activity site, the dATP inhibition is mediated by AHCYL1 which stabilizes dATP in the site. Its function is as follows. Provides the precursors necessary for DNA synthesis. Catalyzes the biosynthesis of deoxyribonucleotides from the corresponding ribonucleotides. The sequence is that of Ribonucleoside-diphosphate reductase large subunit (Rrm1) from Mus musculus (Mouse).